The sequence spans 172 residues: Adenine phosphoribosyltransferase (172 aa).

It belongs to the purine/pyrimidine phosphoribosyltransferase family. As to quaternary structure, homodimer.

The protein resides in the cytoplasm. The catalysed reaction is AMP + diphosphate = 5-phospho-alpha-D-ribose 1-diphosphate + adenine. It functions in the pathway purine metabolism; AMP biosynthesis via salvage pathway; AMP from adenine: step 1/1. Its function is as follows. Catalyzes a salvage reaction resulting in the formation of AMP, that is energically less costly than de novo synthesis. The chain is Adenine phosphoribosyltransferase from Streptococcus agalactiae serotype III (strain NEM316).